We begin with the raw amino-acid sequence, 157 residues long: Endoribonuclease YbeY (157 aa).

Residues His-118, His-122, and His-128 each contribute to the Zn(2+) site.

This sequence belongs to the endoribonuclease YbeY family. Zn(2+) is required as a cofactor.

The protein localises to the cytoplasm. In terms of biological role, single strand-specific metallo-endoribonuclease involved in late-stage 70S ribosome quality control and in maturation of the 3' terminus of the 16S rRNA. The protein is Endoribonuclease YbeY of Bordetella parapertussis (strain 12822 / ATCC BAA-587 / NCTC 13253).